Here is a 130-residue protein sequence, read N- to C-terminus: Large ribosomal subunit protein bL19c (130 aa).

This sequence belongs to the bacterial ribosomal protein bL19 family.

The protein localises to the plastid. Its subcellular location is the chloroplast. The sequence is that of Large ribosomal subunit protein bL19c (rpl19) from Chlorella vulgaris (Green alga).